A 289-amino-acid polypeptide reads, in one-letter code: MPARASRPAPGLPARAGLGFKPEHYATLVEQPPDLGFFEIHAENYMVPGGPAHAQLAWLRERYAISVHGVGLSLGGHDPLDARLLAGHRQLQRRYAPDSISEHLAWSRHDGRYFNDLLPIVYDDAALRRVCAHIDQFQQCLGQPILLENPATYVRFEASHIDEAQFLCELVARTGCGLLLDVNNVYVSAVNHGFDARAYLARLPLAAVGEIHLAGHARQRDAHGRAVLIDSHDAPVDEAVWDLYEYTLALTGPVATLLERDGNIPPLAALLAETDRVAACLARGLALAA.

The protein belongs to the UPF0276 family.

This is UPF0276 protein BB1291 from Bordetella bronchiseptica (strain ATCC BAA-588 / NCTC 13252 / RB50) (Alcaligenes bronchisepticus).